The sequence spans 226 residues: uncharacterized protein (226 aa).

A helical transmembrane segment spans residues 5 to 25; sequence IKTVSFAAAAILVVIICTFLI.

The protein resides in the cell membrane. This is an uncharacterized protein from Bacillus subtilis (strain 168).